Reading from the N-terminus, the 342-residue chain is tRNA N6-adenosine threonylcarbamoyltransferase (342 aa).

The Fe cation site is built by His114 and His118. Residues 136 to 140, Asp169, Gly182, Asp186, and Asn275 each bind substrate; that span reads LVSGG. Asp301 is a binding site for Fe cation.

The protein belongs to the KAE1 / TsaD family. Fe(2+) serves as cofactor.

It is found in the cytoplasm. The enzyme catalyses L-threonylcarbamoyladenylate + adenosine(37) in tRNA = N(6)-L-threonylcarbamoyladenosine(37) in tRNA + AMP + H(+). Functionally, required for the formation of a threonylcarbamoyl group on adenosine at position 37 (t(6)A37) in tRNAs that read codons beginning with adenine. Is involved in the transfer of the threonylcarbamoyl moiety of threonylcarbamoyl-AMP (TC-AMP) to the N6 group of A37, together with TsaE and TsaB. TsaD likely plays a direct catalytic role in this reaction. This Streptococcus pyogenes serotype M4 (strain MGAS10750) protein is tRNA N6-adenosine threonylcarbamoyltransferase.